Consider the following 440-residue polypeptide: tRNA(Ile)-lysidine synthase (440 aa).

Position 13-18 (13-18) interacts with ATP; the sequence is SGGADS.

The protein belongs to the tRNA(Ile)-lysidine synthase family.

It localises to the cytoplasm. The enzyme catalyses cytidine(34) in tRNA(Ile2) + L-lysine + ATP = lysidine(34) in tRNA(Ile2) + AMP + diphosphate + H(+). In terms of biological role, ligates lysine onto the cytidine present at position 34 of the AUA codon-specific tRNA(Ile) that contains the anticodon CAU, in an ATP-dependent manner. Cytidine is converted to lysidine, thus changing the amino acid specificity of the tRNA from methionine to isoleucine. The sequence is that of tRNA(Ile)-lysidine synthase from Solibacter usitatus (strain Ellin6076).